The following is a 151-amino-acid chain: Small ribosomal subunit protein uS15 (151 aa).

The protein belongs to the universal ribosomal protein uS15 family.

The polypeptide is Small ribosomal subunit protein uS15 (RPS13) (Wuchereria bancrofti).